Reading from the N-terminus, the 225-residue chain is MDKRISIAIDGPAAAGKSTVAKVVAKELSYVYIDTGAMYRTLTYAALEQKVDIENEEQLMEVVKNVNIEFQQGENTQLVFLNGQDVSEVIRTPDVTNRVSIVAKHRLVREEMVRRQQELAKKGGVVMDGRDIGTHVLPDAEVKIFMLASVEERAERRHLENLNKGFDSNLEQLKEEIAQRDKLDSEREVSPLKKADDALELDTTSLSIEEVVQKIMSIVSGVFAK.

11–19 (GPAAAGKST) contacts ATP.

The protein belongs to the cytidylate kinase family. Type 1 subfamily.

The protein resides in the cytoplasm. The enzyme catalyses CMP + ATP = CDP + ADP. It carries out the reaction dCMP + ATP = dCDP + ADP. This chain is Cytidylate kinase, found in Bacillus cereus (strain B4264).